The sequence spans 85 residues: Small ribosomal subunit protein bS20 (85 aa).

Belongs to the bacterial ribosomal protein bS20 family.

In terms of biological role, binds directly to 16S ribosomal RNA. This is Small ribosomal subunit protein bS20 from Lactobacillus johnsonii (strain CNCM I-12250 / La1 / NCC 533).